The chain runs to 267 residues: Putative F-box protein At1g61060 (267 aa).

The F-box domain maps to 15–63 (DYFDAIHVDLFTAKILSKLPVKSIAQCRCVSKLWSSQIRRPYYNMLFPI).

The sequence is that of Putative F-box protein At1g61060 from Arabidopsis thaliana (Mouse-ear cress).